The chain runs to 349 residues: ATP synthase subunit a-2 (349 aa).

Positions 1–97 (MERLTRLNHF…SNYMKLMEIP (97 aa)) are excised as a propeptide. The next 7 membrane-spanning stretches (helical) occupy residues 118–138 (FSFTNSSLFMLLTLSFFLLLI), 184–204 (FFPCILVTFLFLLFCNLQGMI), 213–233 (HFLITLALSFSIFIGITIVGF), 240–260 (FFSFLLPAGVPLPLAPFLVLL), 280–300 (MMAGHSLVKILSGFAWTMLCM), 303–323 (IFYFIGALGPLFIVLALTGLE), and 326–346 (VAILQAYVFTILICIYLNDAI).

The protein belongs to the ATPase A chain family. As to quaternary structure, F-type ATPases have 2 components, CF(1) - the catalytic core - and CF(0) - the membrane proton channel. CF(1) has five subunits: alpha(3), beta(3), gamma(1), delta(1), epsilon(1). CF(0) has three main subunits: a, b and c.

Its subcellular location is the mitochondrion inner membrane. Mitochondrial membrane ATP synthase (F(1)F(0) ATP synthase or Complex V) produces ATP from ADP in the presence of a proton gradient across the membrane which is generated by electron transport complexes of the respiratory chain. F-type ATPases consist of two structural domains, F(1) - containing the extramembraneous catalytic core and F(0) - containing the membrane proton channel, linked together by a central stalk and a peripheral stalk. During catalysis, ATP synthesis in the catalytic domain of F(1) is coupled via a rotary mechanism of the central stalk subunits to proton translocation. Key component of the proton channel; it may play a direct role in the translocation of protons across the membrane. This chain is ATP synthase subunit a-2 (ATP6-2), found in Arabidopsis thaliana (Mouse-ear cress).